Consider the following 186-residue polypeptide: MKTIEVDDELYHYIASRTQAIGESASDILRRLLRLPSSPQPFVLVQPNIAEELNASTKSTNQAKKQTNIEKTVQKFERVLKSDTFVNETKNVRRFLMLLSALHISDQQGFANATAVVTGTERTYFATNEDMLLRCGNGVKAKKIPDSPFWVVTNNSTARKGLILTAVMQSMQMPSHLIDRVRVLFA.

Belongs to the SeqA family. As to quaternary structure, homodimer. Polymerizes to form helical filaments.

Its subcellular location is the cytoplasm. In terms of biological role, negative regulator of replication initiation, which contributes to regulation of DNA replication and ensures that replication initiation occurs exactly once per chromosome per cell cycle. Binds to pairs of hemimethylated GATC sequences in the oriC region, thus preventing assembly of replication proteins and re-initiation at newly replicated origins. Repression is relieved when the region becomes fully methylated. This Haemophilus ducreyi (strain 35000HP / ATCC 700724) protein is Negative modulator of initiation of replication.